The sequence spans 342 residues: DNA-directed RNA polymerase subunit alpha (342 aa).

The interval 1–239 is alpha N-terminal domain (alpha-NTD); that stretch reads MTTFLAKNWS…DQLQVFINFQ (239 aa). Positions 254–342 are alpha C-terminal domain (alpha-CTD); it reads INPVLLKKVY…SLAKKHEDQY (89 aa).

It belongs to the RNA polymerase alpha chain family. As to quaternary structure, homodimer. The RNAP catalytic core consists of 2 alpha, 1 beta, 1 beta' and 1 omega subunit. When a sigma factor is associated with the core the holoenzyme is formed, which can initiate transcription.

It catalyses the reaction RNA(n) + a ribonucleoside 5'-triphosphate = RNA(n+1) + diphosphate. Its function is as follows. DNA-dependent RNA polymerase catalyzes the transcription of DNA into RNA using the four ribonucleoside triphosphates as substrates. The protein is DNA-directed RNA polymerase subunit alpha of Orientia tsutsugamushi (strain Boryong) (Rickettsia tsutsugamushi).